Reading from the N-terminus, the 197-residue chain is Large ribosomal subunit protein uL5 (197 aa).

The protein belongs to the universal ribosomal protein uL5 family. In terms of assembly, part of the 50S ribosomal subunit; contacts the 5S rRNA and probably tRNA. Forms a bridge to the 30S subunit in the 70S ribosome.

In terms of biological role, this is one of the proteins that bind and probably mediate the attachment of the 5S RNA into the large ribosomal subunit, where it forms part of the central protuberance. In the 70S ribosome it contacts protein S13 of the 30S subunit (bridge B1b), connecting the 2 subunits; this bridge is implicated in subunit movement. May contact the P site tRNA; the 5S rRNA and some of its associated proteins might help stabilize positioning of ribosome-bound tRNAs. The sequence is that of Large ribosomal subunit protein uL5 from Caldivirga maquilingensis (strain ATCC 700844 / DSM 13496 / JCM 10307 / IC-167).